The primary structure comprises 231 residues: Phosphoheptose isomerase (231 aa).

The SIS domain occupies 35 to 190; it reads LAAVLGGGGR…CAAFDAALER (156 aa). Substrate is bound at residue 50–52; that stretch reads NGG. 2 residues coordinate Zn(2+): His-59 and Glu-63. Substrate-binding positions include Glu-63, 92–93, 118–120, Ser-123, and Gln-170; these read ND and STS. Residues Gln-170 and His-178 each coordinate Zn(2+). Composition is skewed to low complexity over residues 197-206 and 214-225; these read AAGSAASTGR and ASTGRAAGAGRA. Positions 197-231 are disordered; the sequence is AAGSAASTGRAARRERAASTGRAAGAGRAAQRKRR.

Belongs to the SIS family. GmhA subfamily. It depends on Zn(2+) as a cofactor.

It is found in the cytoplasm. It catalyses the reaction 2 D-sedoheptulose 7-phosphate = D-glycero-alpha-D-manno-heptose 7-phosphate + D-glycero-beta-D-manno-heptose 7-phosphate. It functions in the pathway carbohydrate biosynthesis; D-glycero-D-manno-heptose 7-phosphate biosynthesis; D-glycero-alpha-D-manno-heptose 7-phosphate and D-glycero-beta-D-manno-heptose 7-phosphate from sedoheptulose 7-phosphate: step 1/1. Functionally, catalyzes the isomerization of sedoheptulose 7-phosphate in D-glycero-D-manno-heptose 7-phosphate. The protein is Phosphoheptose isomerase of Streptomyces coelicolor (strain ATCC BAA-471 / A3(2) / M145).